We begin with the raw amino-acid sequence, 338 residues long: DNA-directed RNA polymerase subunit alpha (338 aa).

The tract at residues methionine 1–glutamate 234 is alpha N-terminal domain (alpha-NTD). The segment at phenylalanine 250–tyrosine 338 is alpha C-terminal domain (alpha-CTD).

The protein belongs to the RNA polymerase alpha chain family. As to quaternary structure, homodimer. The RNAP catalytic core consists of 2 alpha, 1 beta, 1 beta' and 1 omega subunit. When a sigma factor is associated with the core the holoenzyme is formed, which can initiate transcription.

It carries out the reaction RNA(n) + a ribonucleoside 5'-triphosphate = RNA(n+1) + diphosphate. In terms of biological role, DNA-dependent RNA polymerase catalyzes the transcription of DNA into RNA using the four ribonucleoside triphosphates as substrates. In Beijerinckia indica subsp. indica (strain ATCC 9039 / DSM 1715 / NCIMB 8712), this protein is DNA-directed RNA polymerase subunit alpha.